Reading from the N-terminus, the 295-residue chain is 4-hydroxy-tetrahydrodipicolinate synthase (295 aa).

Thr48 contacts pyruvate. Catalysis depends on Tyr136, which acts as the Proton donor/acceptor. The Schiff-base intermediate with substrate role is filled by Lys164. Residue Ile206 coordinates pyruvate.

The protein belongs to the DapA family. As to quaternary structure, homotetramer; dimer of dimers.

It is found in the cytoplasm. The enzyme catalyses L-aspartate 4-semialdehyde + pyruvate = (2S,4S)-4-hydroxy-2,3,4,5-tetrahydrodipicolinate + H2O + H(+). It participates in amino-acid biosynthesis; L-lysine biosynthesis via DAP pathway; (S)-tetrahydrodipicolinate from L-aspartate: step 3/4. In terms of biological role, catalyzes the condensation of (S)-aspartate-beta-semialdehyde [(S)-ASA] and pyruvate to 4-hydroxy-tetrahydrodipicolinate (HTPA). In Actinobacillus pleuropneumoniae serotype 7 (strain AP76), this protein is 4-hydroxy-tetrahydrodipicolinate synthase.